We begin with the raw amino-acid sequence, 92 residues long: Small ribosomal subunit protein uS19 (92 aa).

This sequence belongs to the universal ribosomal protein uS19 family.

In terms of biological role, protein S19 forms a complex with S13 that binds strongly to the 16S ribosomal RNA. The sequence is that of Small ribosomal subunit protein uS19 from Buchnera aphidicola subsp. Baizongia pistaciae (strain Bp).